A 122-amino-acid polypeptide reads, in one-letter code: MKRAYRLRTPEQYQRVRRDGRTWDAGMLMLNAAPNRRRISRCGFIVAKRLGGAVVRNRIRRRVREAVRLLYPQIAPGWDMVFIARSPALAEIAFPQLQALVQRLLQRAGVVQGAVSETPDKD.

Belongs to the RnpA family. In terms of assembly, consists of a catalytic RNA component (M1 or rnpB) and a protein subunit.

It carries out the reaction Endonucleolytic cleavage of RNA, removing 5'-extranucleotides from tRNA precursor.. Functionally, RNaseP catalyzes the removal of the 5'-leader sequence from pre-tRNA to produce the mature 5'-terminus. It can also cleave other RNA substrates such as 4.5S RNA. The protein component plays an auxiliary but essential role in vivo by binding to the 5'-leader sequence and broadening the substrate specificity of the ribozyme. In Roseiflexus castenholzii (strain DSM 13941 / HLO8), this protein is Ribonuclease P protein component.